Reading from the N-terminus, the 159-residue chain is 2-C-methyl-D-erythritol 2,4-cyclodiphosphate synthase (159 aa).

The a divalent metal cation site is built by Asp-8 and His-10. 4-CDP-2-C-methyl-D-erythritol 2-phosphate is bound by residues 8–10 and 34–35; these read DVH and HS. His-42 is a binding site for a divalent metal cation. 4-CDP-2-C-methyl-D-erythritol 2-phosphate contacts are provided by residues 56-58, 61-65, 100-106, 132-135, Phe-139, and Arg-142; these read DIG, FPDTD, AQAPKML, and TTTE.

The protein belongs to the IspF family. As to quaternary structure, homotrimer. A divalent metal cation serves as cofactor.

The enzyme catalyses 4-CDP-2-C-methyl-D-erythritol 2-phosphate = 2-C-methyl-D-erythritol 2,4-cyclic diphosphate + CMP. It functions in the pathway isoprenoid biosynthesis; isopentenyl diphosphate biosynthesis via DXP pathway; isopentenyl diphosphate from 1-deoxy-D-xylulose 5-phosphate: step 4/6. Its function is as follows. Involved in the biosynthesis of isopentenyl diphosphate (IPP) and dimethylallyl diphosphate (DMAPP), two major building blocks of isoprenoid compounds. Catalyzes the conversion of 4-diphosphocytidyl-2-C-methyl-D-erythritol 2-phosphate (CDP-ME2P) to 2-C-methyl-D-erythritol 2,4-cyclodiphosphate (ME-CPP) with a corresponding release of cytidine 5-monophosphate (CMP). This chain is 2-C-methyl-D-erythritol 2,4-cyclodiphosphate synthase, found in Escherichia coli O139:H28 (strain E24377A / ETEC).